We begin with the raw amino-acid sequence, 219 residues long: Proteasome subunit beta (219 aa).

The propeptide at 1-14 (MISNSEYHKEYMKG) is removed in mature form; by autocatalysis. The active-site Nucleophile is the Thr15.

Belongs to the peptidase T1B family. The 20S proteasome core is composed of 14 alpha and 14 beta subunits that assemble into four stacked heptameric rings, resulting in a barrel-shaped structure. The two inner rings, each composed of seven catalytic beta subunits, are sandwiched by two outer rings, each composed of seven alpha subunits. The catalytic chamber with the active sites is on the inside of the barrel. Has a gated structure, the ends of the cylinder being occluded by the N-termini of the alpha-subunits. Is capped at one or both ends by the proteasome regulatory ATPase, PAN.

It is found in the cytoplasm. The catalysed reaction is Cleavage of peptide bonds with very broad specificity.. With respect to regulation, the formation of the proteasomal ATPase PAN-20S proteasome complex, via the docking of the C-termini of PAN into the intersubunit pockets in the alpha-rings, triggers opening of the gate for substrate entry. Interconversion between the open-gate and close-gate conformations leads to a dynamic regulation of the 20S proteasome proteolysis activity. In terms of biological role, component of the proteasome core, a large protease complex with broad specificity involved in protein degradation. This Methanococcus maripaludis (strain C6 / ATCC BAA-1332) protein is Proteasome subunit beta.